We begin with the raw amino-acid sequence, 899 residues long: Protein suppressor of hairy wing (899 aa).

Disordered stretches follow at residues Met-1 to Thr-33, Ala-45 to Asp-127, and Ala-171 to Arg-206. The span at Ser-21–Thr-31 shows a compositional bias: basic and acidic residues. The segment covering Ala-45 to Ser-55 has biased composition (low complexity). Polar residues-rich tracts occupy residues Lys-67–Gly-83 and Arg-102–Val-111. Acidic residues predominate over residues Val-183–Val-198. The segment at His-218–Cys-240 adopts a C2H2-type 1; atypical zinc-finger fold. The C2H2-type 2 zinc-finger motif lies at Ile-288–His-311. The C2H2-type 3; atypical zinc-finger motif lies at Tyr-318 to His-340. 9 consecutive C2H2-type zinc fingers follow at residues Phe-347–His-365, Met-379–His-401, Tyr-412–His-434, Phe-440–His-462, Tyr-468–His-490, His-496–His-518, Tyr-522–His-544, Phe-552–His-576, and Thr-594–His-617. Disordered regions lie at residues Glu-646–Ile-665, Pro-702–Lys-734, and Gly-865–Ala-899. Residues Glu-874–Ala-899 are compositionally biased toward basic and acidic residues.

It is found in the nucleus. Its function is as follows. Component of the gypsy chromatin insulator complex which is required for the function of the gypsy chromatin insulator and other endogenous chromatin insulators. Chromatin insulators are regulatory elements which establish independent domains of transcriptional activity within eukaryotic genomes. Insulators have two defining properties; they can block the communication between an enhancer and a promoter when placed between them and can also buffer transgenes from position effect variegation (PEV). Insulators are proposed to structure the chromatin fiber into independent domains of differing transcriptional potential by promoting the formation of distinct chromatin loops. This chromatin looping may involve the formation of insulator bodies, where homotypic interactions between individual subunits of the insulator complex could promote the clustering of widely spaced insulators at the nuclear periphery. Within the gypsy insulator complex, this protein binds specifically to a region of the gypsy element located 3' of the 5' long terminal repeat (LTR), and may also mediate interaction with other endogenous insulators at sites distinct from those recognized by Cp190. Cooperates with pita and cliff to recruit Cp190 and regulate insulator function at the front-ultraabdominal (Fub) boundary. The sequence is that of Protein suppressor of hairy wing (su(Hw)) from Drosophila virilis (Fruit fly).